A 121-amino-acid polypeptide reads, in one-letter code: Small ribosomal subunit protein bS6 (121 aa).

The interval M102–A121 is disordered. The span at N105–Q115 shows a compositional bias: basic and acidic residues.

This sequence belongs to the bacterial ribosomal protein bS6 family.

Binds together with bS18 to 16S ribosomal RNA. The chain is Small ribosomal subunit protein bS6 from Polaromonas sp. (strain JS666 / ATCC BAA-500).